The chain runs to 667 residues: MWGRGFLQRARFAQLSPSSSSSRSLLSAASAAPPNLLYSHYQRGRWFGCSTANMAPVRDPNTLSNYDAWRTRHTTANLKIDFTAKCLRGSVILELESQTDKASKEIVLDSSYVTVNSIKLNSAPSLWETKARTEPNGSPVHIAVPEGAAKGEVVKVEIELATTDKCTALQWLTPAQTSDKAAPFMFSQCQAIHARSLFPCQDTPDVKSTYDFNITSPYVVVASGVPVPDETKDLGEEKLYKFQQKVPIPSYLFALSSGEIASAPVGKRSCVCTGPNELKASQWELEGDMDKFLEAAEKIVFPYRWGEYNVLVLPPSFPYGGMENPIFTFATPTIISGDKQNIDVIAHELAHSWSGNLVTSCSWEHFWLNEGWTMYLERRILASIHGGDAHFDFSAIRGWKALEEAIKEYGEDHEFTKLCISHKGIDPDDAFSTVPYEKGFHFVWSLDRLVGRENFDKFIPYYFGKWSNKSLDSYEFKDTFLEFFSAPEYSDLKDKIASIDWEGRFHSTGLPPKPEFDTSLADVCYELAEKWKSKDFTPSPSDVASWTGNQVLVFLNAVQDFEEPLTVEQSQALGKAYGLSESKNAELKAAYYHIAMRSKDASAYQGVADLLGEVGRMKFVRPLFRGLNKVDRELALKTFEKNREFYHPICRQMVEKDLGVSEAANSS.

A peptide contacts are provided by residues 188-190 and 318-323; these read QCQ and PYGGME. Histidine 347 contacts Zn(2+). Catalysis depends on glutamate 348, which acts as the Proton acceptor. 2 residues coordinate Zn(2+): histidine 351 and glutamate 370. The active-site Proton donor is the tyrosine 436.

It belongs to the peptidase M1 family. Zn(2+) is required as a cofactor.

The protein resides in the cytoplasm. Its subcellular location is the nucleus. It carries out the reaction an epoxide + H2O = an ethanediol. Aminopeptidase that preferentially cleaves di- and tripeptides. Also has low epoxide hydrolase activity (in vitro). Can hydrolyze the epoxide leukotriene LTA(4) but it forms preferentially 5,6-dihydroxy-7,9,11,14-eicosatetraenoic acid rather than the cytokine leukotriene B(4) as the product compared to the homologous mammalian enzyme (in vitro). The protein is Leucine aminopeptidase 2 (ara-1) of Neurospora crassa (strain ATCC 24698 / 74-OR23-1A / CBS 708.71 / DSM 1257 / FGSC 987).